Reading from the N-terminus, the 194-residue chain is Probable thymidylate kinase (194 aa).

Residue 9–16 participates in ATP binding; it reads GIDGVGKS.

The protein belongs to the thymidylate kinase family.

It carries out the reaction dTMP + ATP = dTDP + ADP. This chain is Probable thymidylate kinase, found in Methanopyrus kandleri (strain AV19 / DSM 6324 / JCM 9639 / NBRC 100938).